The primary structure comprises 547 residues: MFS-type transporter ltbE (547 aa).

The disordered stretch occupies residues 1–23; that stretch reads MEIAAETTGPAGVTTDVTNAEES. Helical transmembrane passes span 33 to 53, 74 to 94, 104 to 124, 135 to 155, 165 to 185, 195 to 215, 240 to 260, 267 to 287, 310 to 330, 343 to 363, 370 to 390, 399 to 419, and 432 to 452; these read QGWA…VLAI, DIGW…PTCG, WVYC…AVAP, ISGL…SYCV, PIVL…GGSI, FIFW…WFTL, ATLL…GGIV, KVFG…CLQW, GFMM…PIYF, INLL…GSLA, VPFM…YQLV, WIGF…MPIL, and TGLV…PSVG. Asn463 carries an N-linked (GlcNAc...) asparagine glycan. The chain crosses the membrane as a helical span at residues 506–526; the sequence is VFWVGVATPALAWIASWAMEW.

Belongs to the major facilitator superfamily. TCR/Tet family.

The protein resides in the cell membrane. Functionally, MFS-type transporter; part of the gene cluster that mediates the biosynthesis of luteodienoside A, a glycosylated polyketide consisting of an unusual 1-O-beta-D-glucopyranosyl-myo-inositol (glucinol) ester of 3-hydroxy-2,2,4-trimethylocta-4,6-dienoic acid. LtbE is probably involved in the secretion of luteodienoside A. The chain is MFS-type transporter ltbE from Aspergillus luteorubrus.